The following is a 298-amino-acid chain: MSGNNHPGDASAEIDVVLVTGLSGAGRGTAAKVLEDLGWYVADNLPPQLITWMVDFGLAAGSRITQLAVVMDVRSRGFTGDLDSVRRELATRNIIPRVVFMEASDDMLVRRYEQNRRSHPLQGEQTLAEGIAAERRMLAPVRATADLIIDTSALSVPGLRESIERAFGGDASATTSVTVESFGFKYGLPMDADIVMDVRFLPNPHWVDELRSLTGQHSAVRDYVLGQPGAAEFLRTYRRLLSLVVDGYRREGKRYMTVAIGCTGGKHRSVAIAEALMGLLQSDLQLSVRVLHRDLGRE.

Position 21 to 28 (21 to 28 (GLSGAGRG)) interacts with ATP. 72-75 (DVRS) is a binding site for GTP.

The protein belongs to the RapZ-like family.

Displays ATPase and GTPase activities. The sequence is that of Nucleotide-binding protein MLBr00563 from Mycobacterium leprae (strain Br4923).